Here is a 277-residue protein sequence, read N- to C-terminus: Cation-dependent mannose-6-phosphate receptor (277 aa).

Positions 1–26 are cleaved as a signal peptide; sequence MFPFYSCWRTGLLLLLLAVAVRESWQ. Residues 27-185 are Lumenal-facing; the sequence is TEEKTCDLVG…SLACSPEISH (159 aa). Residues 30-181 enclose the MRH domain; sequence KTCDLVGEKG…EMDSSLACSP (152 aa). A disulfide bond links cysteine 32 and cysteine 78. Asparagine 57, asparagine 83, asparagine 94, asparagine 107, and asparagine 113 each carry an N-linked (GlcNAc...) asparagine glycan. Cystine bridges form between cysteine 132-cysteine 167 and cysteine 145-cysteine 179. A helical transmembrane segment spans residues 186 to 210; it reads LSVGSILLVTFASLVAVYVVGGFLY. Residues 211-277 are Cytoplasmic-facing; it reads QRLVVGAKGM…EERDDHLLPM (67 aa). The disordered stretch occupies residues 256 to 277; that stretch reads RGVGDDQLGEESEERDDHLLPM. A Phosphoserine modification is found at serine 267.

In terms of assembly, homodimer. Binds GGA1, GGA2 and GGA3.

It is found in the lysosome membrane. In terms of biological role, transport of phosphorylated lysosomal enzymes from the Golgi complex and the cell surface to lysosomes. Lysosomal enzymes bearing phosphomannosyl residues bind specifically to mannose-6-phosphate receptors in the Golgi apparatus and the resulting receptor-ligand complex is transported to an acidic prelyosomal compartment where the low pH mediates the dissociation of the complex. The polypeptide is Cation-dependent mannose-6-phosphate receptor (M6PR) (Homo sapiens (Human)).